A 138-amino-acid polypeptide reads, in one-letter code: Putative nickel-responsive regulator (138 aa).

Ni(2+)-binding residues include histidine 78, histidine 89, histidine 91, and cysteine 97.

The protein belongs to the transcriptional regulatory CopG/NikR family. Ni(2+) is required as a cofactor.

Transcriptional regulator. The chain is Putative nickel-responsive regulator from Pyrococcus abyssi (strain GE5 / Orsay).